A 132-amino-acid chain; its full sequence is Small ribosomal subunit protein uS8c (132 aa).

This sequence belongs to the universal ribosomal protein uS8 family. Part of the 30S ribosomal subunit.

The protein resides in the plastid. The protein localises to the chloroplast. Its function is as follows. One of the primary rRNA binding proteins, it binds directly to 16S rRNA central domain where it helps coordinate assembly of the platform of the 30S subunit. The polypeptide is Small ribosomal subunit protein uS8c (rps8) (Adiantum capillus-veneris (Maidenhair fern)).